The chain runs to 357 residues: Tetraacyldisaccharide 4'-kinase (357 aa).

54–61 (TVGGAGKT) is an ATP binding site.

It belongs to the LpxK family.

The enzyme catalyses a lipid A disaccharide + ATP = a lipid IVA + ADP + H(+). It functions in the pathway glycolipid biosynthesis; lipid IV(A) biosynthesis; lipid IV(A) from (3R)-3-hydroxytetradecanoyl-[acyl-carrier-protein] and UDP-N-acetyl-alpha-D-glucosamine: step 6/6. In terms of biological role, transfers the gamma-phosphate of ATP to the 4'-position of a tetraacyldisaccharide 1-phosphate intermediate (termed DS-1-P) to form tetraacyldisaccharide 1,4'-bis-phosphate (lipid IVA). This is Tetraacyldisaccharide 4'-kinase from Rhizobium leguminosarum bv. trifolii (strain WSM2304).